Consider the following 269-residue polypeptide: dITP/XTP pyrophosphatase (269 aa).

22–27 (SNNAHK) serves as a coordination point for substrate. The Proton acceptor role is filled by Asp-82. Asp-82 serves as a coordination point for Mg(2+). Substrate is bound by residues Ser-83, 165–168 (FGYD), Lys-188, and 193–194 (HR).

The protein belongs to the HAM1 NTPase family. Homodimer. Mg(2+) serves as cofactor.

The enzyme catalyses XTP + H2O = XMP + diphosphate + H(+). It catalyses the reaction dITP + H2O = dIMP + diphosphate + H(+). The catalysed reaction is ITP + H2O = IMP + diphosphate + H(+). In terms of biological role, pyrophosphatase that catalyzes the hydrolysis of nucleoside triphosphates to their monophosphate derivatives, with a high preference for the non-canonical purine nucleotides XTP (xanthosine triphosphate), dITP (deoxyinosine triphosphate) and ITP. Seems to function as a house-cleaning enzyme that removes non-canonical purine nucleotides from the nucleotide pool, thus preventing their incorporation into DNA/RNA and avoiding chromosomal lesions. The polypeptide is dITP/XTP pyrophosphatase (Treponema pallidum (strain Nichols)).